The primary structure comprises 532 residues: SET and MYND domain-containing protein DDB_G0288495 (532 aa).

In terms of domain architecture, SET spans 25–448; that stretch reads PWIEVKSVSE…ENQELLITYI (424 aa). An MYND-type; degenerate zinc finger spans residues 70 to 116; sequence CTTCFKILLESNRHNFQTCPSCFQVNYCSNYCKQYSKIETKHTELEC. Residues 199–240 adopt a coiled-coil conformation; it reads INSKNNNEFENEEEEEEEQEQKGEGEQEENENNENNEKVKKK. Residues 204-234 are disordered; sequence NNEFENEEEEEEEQEQKGEGEQEENENNENN. Positions 207–217 are enriched in acidic residues; it reads FENEEEEEEEQ.

It belongs to the class V-like SAM-binding methyltransferase superfamily.

In terms of biological role, probable methyltransferase. The polypeptide is SET and MYND domain-containing protein DDB_G0288495 (Dictyostelium discoideum (Social amoeba)).